Consider the following 369-residue polypeptide: Probable dual-specificity RNA methyltransferase RlmN (369 aa).

Residue Glu108 is the Proton acceptor of the active site. The 238-residue stretch at 114 to 351 folds into the Radical SAM core domain; sequence YPDRATLCIS…LAQGVSCTVR (238 aa). Cys121 and Cys362 form a disulfide bridge. Positions 128, 132, and 135 each coordinate [4Fe-4S] cluster. S-adenosyl-L-methionine is bound by residues 183-184, Ser217, 240-242, and Asn319; these read GE and SLH. Catalysis depends on Cys362, which acts as the S-methylcysteine intermediate.

Belongs to the radical SAM superfamily. RlmN family. [4Fe-4S] cluster is required as a cofactor.

The protein resides in the cytoplasm. It carries out the reaction adenosine(2503) in 23S rRNA + 2 reduced [2Fe-2S]-[ferredoxin] + 2 S-adenosyl-L-methionine = 2-methyladenosine(2503) in 23S rRNA + 5'-deoxyadenosine + L-methionine + 2 oxidized [2Fe-2S]-[ferredoxin] + S-adenosyl-L-homocysteine. It catalyses the reaction adenosine(37) in tRNA + 2 reduced [2Fe-2S]-[ferredoxin] + 2 S-adenosyl-L-methionine = 2-methyladenosine(37) in tRNA + 5'-deoxyadenosine + L-methionine + 2 oxidized [2Fe-2S]-[ferredoxin] + S-adenosyl-L-homocysteine. Its function is as follows. Specifically methylates position 2 of adenine 2503 in 23S rRNA and position 2 of adenine 37 in tRNAs. This chain is Probable dual-specificity RNA methyltransferase RlmN, found in Rhodococcus opacus (strain B4).